We begin with the raw amino-acid sequence, 423 residues long: tRNA(Ile)-lysidine synthase (423 aa).

29-34 provides a ligand contact to ATP; it reads SGGKDS.

It belongs to the tRNA(Ile)-lysidine synthase family.

It localises to the cytoplasm. It carries out the reaction cytidine(34) in tRNA(Ile2) + L-lysine + ATP = lysidine(34) in tRNA(Ile2) + AMP + diphosphate + H(+). Functionally, ligates lysine onto the cytidine present at position 34 of the AUA codon-specific tRNA(Ile) that contains the anticodon CAU, in an ATP-dependent manner. Cytidine is converted to lysidine, thus changing the amino acid specificity of the tRNA from methionine to isoleucine. The protein is tRNA(Ile)-lysidine synthase of Lactococcus lactis subsp. lactis (strain IL1403) (Streptococcus lactis).